The primary structure comprises 315 residues: Aspartate carbamoyltransferase catalytic subunit (315 aa).

Residues Arg-64 and Thr-65 each contribute to the carbamoyl phosphate site. An L-aspartate-binding site is contributed by Lys-92. Carbamoyl phosphate-binding residues include Arg-114, His-142, and Gln-145. L-aspartate is bound by residues Arg-175 and Arg-229. Residues Gly-270 and Pro-271 each contribute to the carbamoyl phosphate site.

Belongs to the aspartate/ornithine carbamoyltransferase superfamily. ATCase family. In terms of assembly, heterododecamer (2C3:3R2) of six catalytic PyrB chains organized as two trimers (C3), and six regulatory PyrI chains organized as three dimers (R2).

The catalysed reaction is carbamoyl phosphate + L-aspartate = N-carbamoyl-L-aspartate + phosphate + H(+). It functions in the pathway pyrimidine metabolism; UMP biosynthesis via de novo pathway; (S)-dihydroorotate from bicarbonate: step 2/3. Its function is as follows. Catalyzes the condensation of carbamoyl phosphate and aspartate to form carbamoyl aspartate and inorganic phosphate, the committed step in the de novo pyrimidine nucleotide biosynthesis pathway. The chain is Aspartate carbamoyltransferase catalytic subunit from Bradyrhizobium diazoefficiens (strain JCM 10833 / BCRC 13528 / IAM 13628 / NBRC 14792 / USDA 110).